The following is a 434-amino-acid chain: Adenylosuccinate synthetase (434 aa).

GTP-binding positions include 15-21 (GDEGKGK) and 43-45 (GHT). Asp16 acts as the Proton acceptor in catalysis. Mg(2+) is bound by residues Asp16 and Gly43. IMP is bound by residues 16-19 (DEGK), 41-44 (NAGH), Thr133, Arg147, Gln228, Thr243, and Arg307. The active-site Proton donor is His44. 303 to 309 (SVTGRAR) lines the substrate pocket. Residues Arg309, 335 to 337 (KLD), and 418 to 420 (STG) contribute to the GTP site.

It belongs to the adenylosuccinate synthetase family. As to quaternary structure, homodimer. Mg(2+) serves as cofactor.

The protein resides in the cytoplasm. The catalysed reaction is IMP + L-aspartate + GTP = N(6)-(1,2-dicarboxyethyl)-AMP + GDP + phosphate + 2 H(+). It participates in purine metabolism; AMP biosynthesis via de novo pathway; AMP from IMP: step 1/2. In terms of biological role, plays an important role in the de novo pathway of purine nucleotide biosynthesis. Catalyzes the first committed step in the biosynthesis of AMP from IMP. The polypeptide is Adenylosuccinate synthetase (Neisseria gonorrhoeae (strain NCCP11945)).